Here is a 78-residue protein sequence, read N- to C-terminus: Acyl carrier protein (78 aa).

A Carrier domain is found at 1–76 (MALFEDIQAV…DVVKYIEDNK (76 aa)). At Ser-36 the chain carries O-(pantetheine 4'-phosphoryl)serine.

This sequence belongs to the acyl carrier protein (ACP) family. 4'-phosphopantetheine is transferred from CoA to a specific serine of apo-ACP by AcpS. This modification is essential for activity because fatty acids are bound in thioester linkage to the sulfhydryl of the prosthetic group.

It is found in the cytoplasm. It functions in the pathway lipid metabolism; fatty acid biosynthesis. Carrier of the growing fatty acid chain in fatty acid biosynthesis. The sequence is that of Acyl carrier protein from Helicobacter pylori (strain G27).